The sequence spans 109 residues: Small ribosomal subunit protein uS17 (109 aa).

The protein belongs to the universal ribosomal protein uS17 family. In terms of assembly, part of the 30S ribosomal subunit.

Its function is as follows. One of the primary rRNA binding proteins, it binds specifically to the 5'-end of 16S ribosomal RNA. In Halobacterium salinarum (strain ATCC 29341 / DSM 671 / R1), this protein is Small ribosomal subunit protein uS17.